The following is a 913-amino-acid chain: DNA mismatch repair protein MutS (913 aa).

720 to 727 (GPNASGKS) serves as a coordination point for ATP.

The protein belongs to the DNA mismatch repair MutS family.

Its function is as follows. This protein is involved in the repair of mismatches in DNA. It is possible that it carries out the mismatch recognition step. This protein has a weak ATPase activity. The chain is DNA mismatch repair protein MutS from Prochlorococcus marinus (strain AS9601).